The sequence spans 336 residues: Dihydroorotate dehydrogenase (quinone) (336 aa).

FMN-binding positions include 62-66 (AGLDK) and T86. A substrate-binding site is contributed by K66. 111–115 (NRMGF) provides a ligand contact to substrate. Positions 139 and 172 each coordinate FMN. Residue N172 coordinates substrate. The active-site Nucleophile is S175. N177 serves as a coordination point for substrate. 2 residues coordinate FMN: K217 and T245. 246–247 (NT) lines the substrate pocket. Residues G268, G297, and 318-319 (YS) contribute to the FMN site.

The protein belongs to the dihydroorotate dehydrogenase family. Type 2 subfamily. As to quaternary structure, monomer. Requires FMN as cofactor.

Its subcellular location is the cell membrane. It carries out the reaction (S)-dihydroorotate + a quinone = orotate + a quinol. It participates in pyrimidine metabolism; UMP biosynthesis via de novo pathway; orotate from (S)-dihydroorotate (quinone route): step 1/1. In terms of biological role, catalyzes the conversion of dihydroorotate to orotate with quinone as electron acceptor. This is Dihydroorotate dehydrogenase (quinone) from Salmonella choleraesuis (strain SC-B67).